A 393-amino-acid chain; its full sequence is FAD-dependent monooxygenase dbaB (393 aa).

Residues 1-23 form the signal peptide; that stretch reads MTRTSPTLPVIILGAGMVGLTLA. Residues E37 and R107 each coordinate FAD. N-linked (GlcNAc...) asparagine glycosylation occurs at N128. Y221 is a catalytic residue. Residue N233 is glycosylated (N-linked (GlcNAc...) asparagine). D320 is an FAD binding site.

This sequence belongs to the paxM FAD-dependent monooxygenase family. Requires FAD as cofactor.

It participates in secondary metabolite biosynthesis. FAD-dependent monooxygenase; part of the gene cluster that mediates the biosynthesis of the antibiotic 2,4-dihydroxy-3-methyl-6-(2-oxopropyl)benzaldehyde (DHMBA) and its derivatives. The direct non-reducing polyketide synthase dbaI product is 2,4-dihydroxy-3-methyl-6-(2-oxopropyl)benzaldehyde (DHMBA), produced by condensation of one acetyl-CoA starter unit with 4 malonyl-CoA units and one methylation step. The FAD-dependent monooxygenase dbaH is responsible for the synthesis of yellow pigments derived from the oxidation of DHMBA. The roles of dbaB, C, E and F have still to be determined. This chain is FAD-dependent monooxygenase dbaB, found in Emericella nidulans (strain FGSC A4 / ATCC 38163 / CBS 112.46 / NRRL 194 / M139) (Aspergillus nidulans).